Reading from the N-terminus, the 734-residue chain is Origin of replication complex subunit 3 (734 aa).

2 disordered regions span residues 1-25 and 532-554; these read MAPS…SDTA and GQRQ…KLEK. Polar residues predominate over residues 12-24; the sequence is QCSTTDSFNSSDT.

Belongs to the ORC3 family. In terms of assembly, component of the origin recognition complex (ORC) composed of at least ORC1 (ORC1A or ORC1B), ORC2, ORC3, ORC4, ORC5 and ORC6. ORC is regulated in a cell-cycle and development dependent manner. It is sequentially assembled at the exit from anaphase of mitosis and disassembled as cells enter S phase. Interacts directly with ORC1A, ORC2, ORC4, ORC5 and ORC6. In terms of tissue distribution, follow a cell-cycle regulation with a peak at the G1/S-phase. Mostly expressed in siliques and flowers, and, to a lower exent, in flower buds, leaves, roots and stems.

The protein resides in the nucleus. In terms of biological role, component of the origin recognition complex (ORC) that binds origins of replication. DNA-binding is ATP-dependent. The specific DNA sequences that define origins of replication have not been identified yet. The polypeptide is Origin of replication complex subunit 3 (Arabidopsis thaliana (Mouse-ear cress)).